The chain runs to 427 residues: V-type proton ATPase subunit C 2 (427 aa).

A disordered region spans residues 292–319 (HKVKVTPLGNPDRPAAGQTDRERESEGE).

The protein belongs to the V-ATPase C subunit family. In terms of assembly, V-ATPase is a heteromultimeric enzyme made up of two complexes: the ATP-hydrolytic V1 complex and the proton translocation V0 complex. The V1 complex consists of three catalytic AB heterodimers that form a heterohexamer, three peripheral stalks each consisting of EG heterodimers, one central rotor including subunits D and F, and the regulatory subunits C and H. The proton translocation complex V0 consists of the proton transport subunit a, a ring of proteolipid subunits c9c'', rotary subunit d, subunits e and f, and the accessory subunits ATP6AP1/Ac45 and ATP6AP2/PRR. In terms of tissue distribution, kidney and placenta.

In terms of biological role, subunit of the V1 complex of vacuolar(H+)-ATPase (V-ATPase), a multisubunit enzyme composed of a peripheral complex (V1) that hydrolyzes ATP and a membrane integral complex (V0) that translocates protons. V-ATPase is responsible for acidifying and maintaining the pH of intracellular compartments and in some cell types, is targeted to the plasma membrane, where it is responsible for acidifying the extracellular environment. Subunit C is necessary for the assembly of the catalytic sector of the enzyme and is likely to have a specific function in its catalytic activity. The protein is V-type proton ATPase subunit C 2 (ATP6V1C2) of Homo sapiens (Human).